Here is a 107-residue protein sequence, read N- to C-terminus: MPPKQQLSKAAKAAAAMAGGKKSKKKWSKKSHKDKAQHAVILDQEKFDRILKEVPTYRYVSVSVLVDRLKIGGSMARVALRHLEREGIIKPISKHSKQAIYTRASAE.

The interval 1 to 35 (MPPKQQLSKAAKAAAAMAGGKKSKKKWSKKSHKDK) is disordered. Low complexity predominate over residues 8–20 (SKAAKAAAAMAGG). Basic residues predominate over residues 21–35 (KKSKKKWSKKSHKDK).

The protein belongs to the eukaryotic ribosomal protein eS25 family.

This Candida glabrata (strain ATCC 2001 / BCRC 20586 / JCM 3761 / NBRC 0622 / NRRL Y-65 / CBS 138) (Yeast) protein is Small ribosomal subunit protein eS25 (RPS25).